The chain runs to 232 residues: Ornithine carbamoyltransferase (232 aa).

Carbamoyl phosphate is bound by residues Gln-15, Arg-39, and 66 to 69 (HPTQ). Residues Asn-99, Asp-163, and 167–168 (SM) contribute to the L-ornithine site. Carbamoyl phosphate-binding positions include 204–207 (HCLP) and Thr-232.

The protein belongs to the aspartate/ornithine carbamoyltransferase superfamily. OTCase family.

The protein localises to the cytoplasm. The enzyme catalyses carbamoyl phosphate + L-ornithine = L-citrulline + phosphate + H(+). It participates in amino-acid biosynthesis; L-arginine biosynthesis; L-arginine from L-ornithine and carbamoyl phosphate: step 1/3. Functionally, reversibly catalyzes the transfer of the carbamoyl group from carbamoyl phosphate (CP) to the N(epsilon) atom of ornithine (ORN) to produce L-citrulline. This Neisseria flava protein is Ornithine carbamoyltransferase (argF).